The primary structure comprises 178 residues: Prion-like protein doppel (178 aa).

A signal peptide spans Met-1–Lys-25. The tract at residues Arg-27–Arg-50 is flexible tail. Residues Thr-51–Gly-154 form a globular region. Cystine bridges form between Cys-94/Cys-147 and Cys-108/Cys-142. Residues Asn-98 and Asn-110 are each glycosylated (N-linked (GlcNAc...) asparagine). The cu(2+) binding stretch occupies residues Lys-124–Leu-141. Gly-154 carries GPI-anchor amidated glycine lipidation. Positions Ala-155–Lys-178 are cleaved as a propeptide — removed in mature form.

This sequence belongs to the prion family. Post-translationally, N-glycosylated. In terms of processing, O-glycosylated. As to expression, strongly expressed in testis. Detected at low levels in ovary, spleen, kidney and mammary gland.

The protein localises to the cell membrane. Functionally, required for normal acrosome reaction and for normal male fertility. Can bind Cu(2+). The chain is Prion-like protein doppel (PRND) from Bos taurus (Bovine).